The chain runs to 472 residues: Glutamate--tRNA ligase 2 (472 aa).

Residues 12-22 (PSPSGLLHLGN) carry the 'HIGH' region motif. The short motif at 253–257 (PLSKR) is the 'KMSKS' region element. Lys256 contributes to the ATP binding site.

Belongs to the class-I aminoacyl-tRNA synthetase family. Glutamate--tRNA ligase type 1 subfamily. As to quaternary structure, monomer.

The protein resides in the cytoplasm. The catalysed reaction is tRNA(Glu) + L-glutamate + ATP = L-glutamyl-tRNA(Glu) + AMP + diphosphate. Functionally, catalyzes the attachment of glutamate to tRNA(Glu) in a two-step reaction: glutamate is first activated by ATP to form Glu-AMP and then transferred to the acceptor end of tRNA(Glu). This is Glutamate--tRNA ligase 2 from Nitrosococcus oceani (strain ATCC 19707 / BCRC 17464 / JCM 30415 / NCIMB 11848 / C-107).